The sequence spans 171 residues: uncharacterized protein (171 aa).

Positions 1 to 20 (MRRVLFSCFCGLLWSSSGWA) are cleaved as a signal peptide. Cysteine 40 and cysteine 80 are disulfide-bonded.

The protein belongs to the fimbrial protein family.

Its subcellular location is the fimbrium. Part of the sfmACDHF fimbrial operon. Could contribute to adhesion to various surfaces in specific environmental niches. Increases adhesion to eukaryotic T24 bladder epithelial cells in the absence of fim genes. This is an uncharacterized protein from Escherichia coli (strain K12).